Here is a 479-residue protein sequence, read N- to C-terminus: Trigger factor (479 aa).

Residues 174–261 (GDIAVVSFSG…LKELKTRELP (88 aa)) enclose the PPIase FKBP-type domain. The disordered stretch occupies residues 437 to 479 (KVLESEAKTSKPAAKSKGSKTKSTKTKTNKAKTEKPASDKTKS). The span at 453 to 466 (KGSKTKSTKTKTNK) shows a compositional bias: basic residues. The span at 467–479 (AKTEKPASDKTKS) shows a compositional bias: basic and acidic residues.

The protein belongs to the FKBP-type PPIase family. Tig subfamily.

It localises to the cytoplasm. The enzyme catalyses [protein]-peptidylproline (omega=180) = [protein]-peptidylproline (omega=0). Involved in protein export. Acts as a chaperone by maintaining the newly synthesized protein in an open conformation. Functions as a peptidyl-prolyl cis-trans isomerase. The protein is Trigger factor of Prochlorococcus marinus (strain MIT 9303).